We begin with the raw amino-acid sequence, 358 residues long: UDP-N-acetylglucosamine--N-acetylmuramyl-(pentapeptide) pyrophosphoryl-undecaprenol N-acetylglucosamine transferase (358 aa).

Residues 11–13 (TGG), Asn124, Arg164, Ser195, and Gln291 contribute to the UDP-N-acetyl-alpha-D-glucosamine site.

This sequence belongs to the glycosyltransferase 28 family. MurG subfamily.

Its subcellular location is the cell inner membrane. The catalysed reaction is di-trans,octa-cis-undecaprenyl diphospho-N-acetyl-alpha-D-muramoyl-L-alanyl-D-glutamyl-meso-2,6-diaminopimeloyl-D-alanyl-D-alanine + UDP-N-acetyl-alpha-D-glucosamine = di-trans,octa-cis-undecaprenyl diphospho-[N-acetyl-alpha-D-glucosaminyl-(1-&gt;4)]-N-acetyl-alpha-D-muramoyl-L-alanyl-D-glutamyl-meso-2,6-diaminopimeloyl-D-alanyl-D-alanine + UDP + H(+). It functions in the pathway cell wall biogenesis; peptidoglycan biosynthesis. Functionally, cell wall formation. Catalyzes the transfer of a GlcNAc subunit on undecaprenyl-pyrophosphoryl-MurNAc-pentapeptide (lipid intermediate I) to form undecaprenyl-pyrophosphoryl-MurNAc-(pentapeptide)GlcNAc (lipid intermediate II). This chain is UDP-N-acetylglucosamine--N-acetylmuramyl-(pentapeptide) pyrophosphoryl-undecaprenol N-acetylglucosamine transferase, found in Leptospira borgpetersenii serovar Hardjo-bovis (strain JB197).